We begin with the raw amino-acid sequence, 454 residues long: Signal recognition particle protein (454 aa).

GTP is bound by residues 102 to 109 (GLQGTGKT), 184 to 188 (DTAGR), and 242 to 245 (TKMD).

This sequence belongs to the GTP-binding SRP family. SRP54 subfamily. Part of the signal recognition particle protein translocation system, which is composed of SRP and FtsY.

The protein localises to the cytoplasm. It catalyses the reaction GTP + H2O = GDP + phosphate + H(+). Involved in targeting and insertion of nascent membrane proteins into the cytoplasmic membrane. Binds to the hydrophobic signal sequence of the ribosome-nascent chain (RNC) as it emerges from the ribosomes. The SRP-RNC complex is then targeted to the cytoplasmic membrane where it interacts with the SRP receptor FtsY. The chain is Signal recognition particle protein from Aquifex aeolicus (strain VF5).